A 274-amino-acid polypeptide reads, in one-letter code: NH(3)-dependent NAD(+) synthetase (274 aa).

46-53 (GISGGQDS) serves as a coordination point for ATP. Asp-52 serves as a coordination point for Mg(2+). Residue Arg-140 coordinates deamido-NAD(+). Residue Thr-160 coordinates ATP. Residue Glu-165 coordinates Mg(2+). Residues Lys-173 and Asp-180 each coordinate deamido-NAD(+). 2 residues coordinate ATP: Lys-189 and Thr-211. 260–261 (HK) lines the deamido-NAD(+) pocket.

It belongs to the NAD synthetase family. In terms of assembly, homodimer.

It catalyses the reaction deamido-NAD(+) + NH4(+) + ATP = AMP + diphosphate + NAD(+) + H(+). The protein operates within cofactor biosynthesis; NAD(+) biosynthesis; NAD(+) from deamido-NAD(+) (ammonia route): step 1/1. Functionally, catalyzes the ATP-dependent amidation of deamido-NAD to form NAD. Uses ammonia as a nitrogen source. The polypeptide is NH(3)-dependent NAD(+) synthetase (Streptococcus pneumoniae serotype 19F (strain G54)).